Consider the following 313-residue polypeptide: tRNA dimethylallyltransferase (313 aa).

10 to 17 (GPTASGKT) provides a ligand contact to ATP. 12–17 (TASGKT) is a substrate binding site. 3 interaction with substrate tRNA regions span residues 35 to 38 (DSAM), 159 to 163 (QRIQR), and 240 to 245 (RCVGYR).

Belongs to the IPP transferase family. As to quaternary structure, monomer. The cofactor is Mg(2+).

It carries out the reaction adenosine(37) in tRNA + dimethylallyl diphosphate = N(6)-dimethylallyladenosine(37) in tRNA + diphosphate. Its function is as follows. Catalyzes the transfer of a dimethylallyl group onto the adenine at position 37 in tRNAs that read codons beginning with uridine, leading to the formation of N6-(dimethylallyl)adenosine (i(6)A). The sequence is that of tRNA dimethylallyltransferase from Legionella pneumophila (strain Paris).